Consider the following 991-residue polypeptide: Antigenic heat-stable 120 kDa protein (991 aa).

Disordered stretches follow at residues 1–37, 54–73, and 348–384; these read DTSE…TPAL, TPSM…TSDP, and GQSK…TNQP. Over residues 12–29 the composition is skewed to basic and acidic residues; sequence EYTEEQKQTEEQEQKEFL. The segment covering 348–373 has biased composition (polar residues); it reads GQSKEQPLITPQQTTSSSVEPPQYKQ.

The protein localises to the cytoplasm. The chain is Antigenic heat-stable 120 kDa protein (sca4) from Rickettsia sibirica.